A 511-amino-acid polypeptide reads, in one-letter code: 2-isopropylmalate synthase (511 aa).

A Pyruvate carboxyltransferase domain is found at 4–266 (IDIFDTTLRD…ETGIQLQEIK (263 aa)). The Mn(2+) site is built by D13, H201, H203, and N237. The interval 392-511 (ELKMVQVQYG…IKESLRAHPV (120 aa)) is regulatory domain.

Belongs to the alpha-IPM synthase/homocitrate synthase family. LeuA type 1 subfamily. Homodimer. Mn(2+) serves as cofactor.

The protein resides in the cytoplasm. It catalyses the reaction 3-methyl-2-oxobutanoate + acetyl-CoA + H2O = (2S)-2-isopropylmalate + CoA + H(+). Its pathway is amino-acid biosynthesis; L-leucine biosynthesis; L-leucine from 3-methyl-2-oxobutanoate: step 1/4. In terms of biological role, catalyzes the condensation of the acetyl group of acetyl-CoA with 3-methyl-2-oxobutanoate (2-ketoisovalerate) to form 3-carboxy-3-hydroxy-4-methylpentanoate (2-isopropylmalate). This is 2-isopropylmalate synthase from Lysinibacillus sphaericus (strain C3-41).